Consider the following 430-residue polypeptide: GTPase Obg (430 aa).

An Obg domain is found at 1–158 (MFVDQVKISL…LDVSLELKLL (158 aa)). Residues 118–145 (KGGRGGRGNSRFATPRNPAPDFSEKGEP) are disordered. In terms of domain architecture, OBG-type G spans 159 to 329 (ADVGLVGFPS…LLYAIADKLE (171 aa)). Residues 165–172 (GFPSVGKS), 190–194 (FTTIK), 212–215 (DLPG), 282–285 (NKMD), and 310–312 (STI) each bind GTP. Residues Ser-172 and Thr-192 each coordinate Mg(2+). The 79-residue stretch at 352 to 430 (KHTPSQDKFT…ILGGEFEFVE (79 aa)) folds into the OCT domain.

It belongs to the TRAFAC class OBG-HflX-like GTPase superfamily. OBG GTPase family. Monomer. It depends on Mg(2+) as a cofactor.

The protein resides in the cytoplasm. Functionally, an essential GTPase which binds GTP, GDP and possibly (p)ppGpp with moderate affinity, with high nucleotide exchange rates and a fairly low GTP hydrolysis rate. Plays a role in control of the cell cycle, stress response, ribosome biogenesis and in those bacteria that undergo differentiation, in morphogenesis control. This is GTPase Obg from Staphylococcus aureus (strain Mu3 / ATCC 700698).